The following is a 622-amino-acid chain: Chaperone protein HscA homolog (622 aa).

The protein belongs to the heat shock protein 70 family.

Functionally, chaperone involved in the maturation of iron-sulfur cluster-containing proteins. Has a low intrinsic ATPase activity which is markedly stimulated by HscB. This Azoarcus sp. (strain BH72) protein is Chaperone protein HscA homolog.